A 344-amino-acid polypeptide reads, in one-letter code: Ketol-acid reductoisomerase (NADP(+)) (344 aa).

The 180-residue stretch at 2–181 (EKIYYDADIS…GAGRAGILTT (180 aa)) folds into the KARI N-terminal Rossmann domain. NADP(+)-binding positions include 25–28 (YGSQ), arginine 48, serine 52, and 82–85 (DERQ). The active site involves histidine 107. Glycine 133 provides a ligand contact to NADP(+). The region spanning 182 to 327 (TFREETETDL…RKLRSMMPFI (146 aa)) is the KARI C-terminal knotted domain. The Mg(2+) site is built by aspartate 190, glutamate 194, glutamate 226, and glutamate 230. Residue serine 251 coordinates substrate.

The protein belongs to the ketol-acid reductoisomerase family. It depends on Mg(2+) as a cofactor.

The catalysed reaction is (2R)-2,3-dihydroxy-3-methylbutanoate + NADP(+) = (2S)-2-acetolactate + NADPH + H(+). The enzyme catalyses (2R,3R)-2,3-dihydroxy-3-methylpentanoate + NADP(+) = (S)-2-ethyl-2-hydroxy-3-oxobutanoate + NADPH + H(+). Its pathway is amino-acid biosynthesis; L-isoleucine biosynthesis; L-isoleucine from 2-oxobutanoate: step 2/4. It functions in the pathway amino-acid biosynthesis; L-valine biosynthesis; L-valine from pyruvate: step 2/4. Functionally, involved in the biosynthesis of branched-chain amino acids (BCAA). Catalyzes an alkyl-migration followed by a ketol-acid reduction of (S)-2-acetolactate (S2AL) to yield (R)-2,3-dihydroxy-isovalerate. In the isomerase reaction, S2AL is rearranged via a Mg-dependent methyl migration to produce 3-hydroxy-3-methyl-2-ketobutyrate (HMKB). In the reductase reaction, this 2-ketoacid undergoes a metal-dependent reduction by NADPH to yield (R)-2,3-dihydroxy-isovalerate. The chain is Ketol-acid reductoisomerase (NADP(+)) from Alicyclobacillus acidocaldarius subsp. acidocaldarius (strain ATCC 27009 / DSM 446 / BCRC 14685 / JCM 5260 / KCTC 1825 / NBRC 15652 / NCIMB 11725 / NRRL B-14509 / 104-IA) (Bacillus acidocaldarius).